Reading from the N-terminus, the 160-residue chain is MKVMVIQGPNINMLGVRETHIYGNMKMEDIHEQMKQAAKQANVEIEFFQSNFEGELVDKIQECLGSVDGVIINAAAYAHTSIAIRDAITAINMPVIEVHISNTYRREEFRQKSMIAPVCAGSVVGFGPFGYHMALMGLFQIFDQINAYKAAQAKAQQANQ.

The Proton acceptor role is filled by Tyr-22. Substrate-binding residues include Asn-73, His-79, and Asp-86. Residue His-99 is the Proton donor of the active site. Residues Ile-100 to Ser-101 and Arg-110 contribute to the substrate site.

This sequence belongs to the type-II 3-dehydroquinase family. In terms of assembly, homododecamer.

It catalyses the reaction 3-dehydroquinate = 3-dehydroshikimate + H2O. It participates in metabolic intermediate biosynthesis; chorismate biosynthesis; chorismate from D-erythrose 4-phosphate and phosphoenolpyruvate: step 3/7. Catalyzes a trans-dehydration via an enolate intermediate. The polypeptide is 3-dehydroquinate dehydratase (Campylobacter lari (strain RM2100 / D67 / ATCC BAA-1060)).